A 153-amino-acid chain; its full sequence is 6,7-dimethyl-8-ribityllumazine synthase 1 (153 aa).

Residues Phe-16, 50–52, and 74–76 each bind 5-amino-6-(D-ribitylamino)uracil; these read AYE and CVI. A (2S)-2-hydroxy-3-oxobutyl phosphate-binding site is contributed by 79-80; it reads ET. His-82 acts as the Proton donor in catalysis. Phe-107 is a 5-amino-6-(D-ribitylamino)uracil binding site. A (2S)-2-hydroxy-3-oxobutyl phosphate-binding site is contributed by Arg-121.

This sequence belongs to the DMRL synthase family.

The enzyme catalyses (2S)-2-hydroxy-3-oxobutyl phosphate + 5-amino-6-(D-ribitylamino)uracil = 6,7-dimethyl-8-(1-D-ribityl)lumazine + phosphate + 2 H2O + H(+). The protein operates within cofactor biosynthesis; riboflavin biosynthesis; riboflavin from 2-hydroxy-3-oxobutyl phosphate and 5-amino-6-(D-ribitylamino)uracil: step 1/2. Its function is as follows. Catalyzes the formation of 6,7-dimethyl-8-ribityllumazine by condensation of 5-amino-6-(D-ribitylamino)uracil with 3,4-dihydroxy-2-butanone 4-phosphate. This is the penultimate step in the biosynthesis of riboflavin. This Caulobacter vibrioides (strain ATCC 19089 / CIP 103742 / CB 15) (Caulobacter crescentus) protein is 6,7-dimethyl-8-ribityllumazine synthase 1.